The chain runs to 265 residues: Phosphate import ATP-binding protein PstB 2 (265 aa).

In terms of domain architecture, ABC transporter spans F13–V260. Residue G45–S52 participates in ATP binding.

This sequence belongs to the ABC transporter superfamily. Phosphate importer (TC 3.A.1.7) family. The complex is composed of two ATP-binding proteins (PstB), two transmembrane proteins (PstC and PstA) and a solute-binding protein (PstS).

It is found in the cell inner membrane. It catalyses the reaction phosphate(out) + ATP + H2O = ADP + 2 phosphate(in) + H(+). Part of the ABC transporter complex PstSACB involved in phosphate import. Responsible for energy coupling to the transport system. This is Phosphate import ATP-binding protein PstB 2 from Synechococcus sp. (strain JA-2-3B'a(2-13)) (Cyanobacteria bacterium Yellowstone B-Prime).